A 366-amino-acid polypeptide reads, in one-letter code: MNLLETVEQDTMPTHYKQMTQAEMIARVTEIKAQLGENLFIPCHHYQKDEVVPFADAIGDSLQLAQIAAQNKKAKHIVFCGVHFMAETADMLTTSEQIVTLPDMRAGCSMADMADIHQLTNAWPKLQTLFGDTILPVTYINSTAAIKSFVGEHGGTTVTSSNATKIVSWALEQKERIFFLPDQHLGRNTAFELGIPLEHMAIWNPIKNELEYEGNLDDCKVILWKGYCSVHQHFTVKNIENIRKNNPKMRIIVHPECTHEVVSLADDSGSTKKIVTEINNAAPGTEWAVGTEANLVGRIIQENPDKKIVSLNPFMCPCMTMNRIDLPHLLWTLEAIQNGEQRNQIKVDKQTTKFALKALERMLQLS.

Iminosuccinate-binding residues include histidine 44 and serine 61. A [4Fe-4S] cluster-binding site is contributed by cysteine 108. Residues 139 to 141 (YIN) and serine 160 each bind iminosuccinate. Cysteine 228 contributes to the [4Fe-4S] cluster binding site. Residues 254 to 256 (HPE) and threonine 271 each bind iminosuccinate. [4Fe-4S] cluster is bound at residue cysteine 318.

It belongs to the quinolinate synthase family. Type 3 subfamily. [4Fe-4S] cluster serves as cofactor.

It localises to the cytoplasm. It carries out the reaction iminosuccinate + dihydroxyacetone phosphate = quinolinate + phosphate + 2 H2O + H(+). It participates in cofactor biosynthesis; NAD(+) biosynthesis; quinolinate from iminoaspartate: step 1/1. Its function is as follows. Catalyzes the condensation of iminoaspartate with dihydroxyacetone phosphate to form quinolinate. The chain is Quinolinate synthase from Listeria monocytogenes serotype 4b (strain F2365).